Reading from the N-terminus, the 310-residue chain is tRNA-cytidine(32) 2-sulfurtransferase (310 aa).

The PP-loop motif motif lies at 47–52; that stretch reads SGGKDS. [4Fe-4S] cluster contacts are provided by Cys-122, Cys-125, and Cys-213.

Belongs to the TtcA family. Homodimer. It depends on Mg(2+) as a cofactor. Requires [4Fe-4S] cluster as cofactor.

It is found in the cytoplasm. It carries out the reaction cytidine(32) in tRNA + S-sulfanyl-L-cysteinyl-[cysteine desulfurase] + AH2 + ATP = 2-thiocytidine(32) in tRNA + L-cysteinyl-[cysteine desulfurase] + A + AMP + diphosphate + H(+). The protein operates within tRNA modification. Its function is as follows. Catalyzes the ATP-dependent 2-thiolation of cytidine in position 32 of tRNA, to form 2-thiocytidine (s(2)C32). The sulfur atoms are provided by the cysteine/cysteine desulfurase (IscS) system. This Serratia proteamaculans (strain 568) protein is tRNA-cytidine(32) 2-sulfurtransferase.